Consider the following 238-residue polypeptide: Purine nucleoside phosphorylase DeoD-type (238 aa).

A purine D-ribonucleoside is bound at residue His-4. Residues Gly-20, Arg-24, Arg-43, and 87 to 90 (RVGS) each bind phosphate. Residues 179–181 (EME) and 203–204 (SD) each bind a purine D-ribonucleoside. The Proton donor role is filled by Asp-204.

This sequence belongs to the PNP/UDP phosphorylase family. As to quaternary structure, homohexamer; trimer of homodimers.

It catalyses the reaction a purine D-ribonucleoside + phosphate = a purine nucleobase + alpha-D-ribose 1-phosphate. The catalysed reaction is a purine 2'-deoxy-D-ribonucleoside + phosphate = a purine nucleobase + 2-deoxy-alpha-D-ribose 1-phosphate. Catalyzes the reversible phosphorolytic breakdown of the N-glycosidic bond in the beta-(deoxy)ribonucleoside molecules, with the formation of the corresponding free purine bases and pentose-1-phosphate. This chain is Purine nucleoside phosphorylase DeoD-type, found in Actinobacillus succinogenes (strain ATCC 55618 / DSM 22257 / CCUG 43843 / 130Z).